The sequence spans 1763 residues: Non-reducing polyketide synthase PKS19 (1763 aa).

The segment at 20–261 (GDQRNLFRKL…PMKKVQGMWH (242 aa)) is N-terminal acylcarrier protein transacylase domain (SAT). Residues 390–822 (SSKIAVVGMA…GGNTSIIIEE (433 aa)) enclose the Ketosynthase family 3 (KS3) domain. Residues Cys-561, His-696, and His-740 each act as for beta-ketoacyl synthase activity in the active site. The interval 922 to 1227 (FAFTGQGTFY…QRDTDNWLTL (306 aa)) is malonyl-CoA:ACP transacylase (MAT) domain. The interval 1307–1439 (HRLISEQYTD…VFYEDPSSWL (133 aa)) is N-terminal hotdog fold. A PKS/mFAS DH domain is found at 1307-1609 (HRLISEQYTD…FLQWPRVMLN (303 aa)). Residues 1334 to 1588 (GVVDGHAMNG…FVGDVYVLQG (255 aa)) are product template (PT) domain. Residue His-1339 is the Proton acceptor; for dehydratase activity of the active site. The tract at residues 1461–1609 (VTGKASKLTT…FLQWPRVMLN (149 aa)) is C-terminal hotdog fold. Asp-1522 serves as the catalytic Proton donor; for dehydratase activity. A disordered region spans residues 1619–1690 (AKPAAKVPGK…MEELPSPPAG (72 aa)). Basic residues predominate over residues 1635–1647 (PHFKPHHVSRHKP). The region spanning 1689–1763 (AGMNDDMEKA…TIQDLKALLR (75 aa)) is the Carrier domain. Residue Ser-1726 is modified to O-(pantetheine 4'-phosphoryl)serine.

In terms of biological role, non-reducing polyketide synthase that mediates the biosynthesis of alternariol (AOH), a micotoxin that seems not to be involved in virulence and oxidative stress tolerance. PKS19 alone is sufficient for AOH synthesis which is initiated by priming with acetyl-CoA, followed by sequential condensations of 6 malonyl-CoA units. This is Non-reducing polyketide synthase PKS19 from Phaeosphaeria nodorum (strain SN15 / ATCC MYA-4574 / FGSC 10173) (Glume blotch fungus).